Reading from the N-terminus, the 378-residue chain is Probable 3-hydroxyisobutyryl-CoA hydrolase 2 (378 aa).

Gly115, Glu138, and Asp146 together coordinate substrate. The Microbody targeting signal signature appears at 376-378 (AKL).

It belongs to the enoyl-CoA hydratase/isomerase family.

Its subcellular location is the peroxisome. It catalyses the reaction 3-hydroxy-2-methylpropanoyl-CoA + H2O = 3-hydroxy-2-methylpropanoate + CoA + H(+). The protein operates within amino-acid degradation; L-valine degradation. Involved in valine catabolism. The chain is Probable 3-hydroxyisobutyryl-CoA hydrolase 2 from Arabidopsis thaliana (Mouse-ear cress).